We begin with the raw amino-acid sequence, 192 residues long: Small ribosomal subunit protein uS5 (192 aa).

In terms of domain architecture, S5 DRBM spans 20–83 (FVDKLVHINR…EAAKRGLIRV (64 aa)). The interval 162–192 (SVAARRGLKVSALQARRRDADPADTSEAAVA) is disordered.

Belongs to the universal ribosomal protein uS5 family. As to quaternary structure, part of the 30S ribosomal subunit. Contacts proteins S4 and S8.

Functionally, with S4 and S12 plays an important role in translational accuracy. Located at the back of the 30S subunit body where it stabilizes the conformation of the head with respect to the body. In Methylorubrum extorquens (strain CM4 / NCIMB 13688) (Methylobacterium extorquens), this protein is Small ribosomal subunit protein uS5.